We begin with the raw amino-acid sequence, 299 residues long: Regucalcin (299 aa).

E18 lines the a divalent metal cation pocket. Residues R101, N103, and E121 each contribute to the substrate site. K144 bears the N6-succinyllysine mark. Residues N154 and D204 each coordinate a divalent metal cation. D204 acts as the Proton donor/acceptor in catalysis. N6-succinyllysine occurs at positions 244 and 253.

Belongs to the SMP-30/CGR1 family. Monomer. It depends on Zn(2+) as a cofactor. Mn(2+) is required as a cofactor. Requires Ca(2+) as cofactor. Mg(2+) serves as cofactor.

It is found in the cytoplasm. It catalyses the reaction D-glucono-1,5-lactone + H2O = D-gluconate + H(+). Its function is as follows. Gluconolactonase with low activity towards other sugar lactones, including gulonolactone and galactonolactone. Can also hydrolyze diisopropyl phosphorofluoridate and phenylacetate (in vitro). Calcium-binding protein. Modulates Ca(2+) signaling, and Ca(2+)-dependent cellular processes and enzyme activities. The sequence is that of Regucalcin (RGN) from Pongo abelii (Sumatran orangutan).